A 372-amino-acid polypeptide reads, in one-letter code: Hydrogenase-1 small chain (372 aa).

The tat-type signal signal peptide spans 1-45; that stretch reads MNNEETFYQAMRRQGVTRRSFLKYCSLAATSLGLGAGMAPKIAWA. Residues 46–325 lie on the Periplasmic side of the membrane; it reads LENKPRIPVV…PQMGTHSTAD (280 aa). [4Fe-4S] cluster is bound by residues Cys-62, Cys-65, Cys-160, Cys-194, His-232, Cys-235, Cys-260, and Cys-266. Cys-275, Cys-294, and Cys-297 together coordinate [3Fe-4S] cluster. The chain crosses the membrane as a helical span at residues 326–346; the sequence is TVGLTALGVVAAAVGVHAVAS. The interval 346–372 is disordered; that stretch reads SSVDQRRRHNQQPTETEHQPGNEDKQA. Residues 347–372 are Cytoplasmic-facing; that stretch reads SVDQRRRHNQQPTETEHQPGNEDKQA. Positions 360-372 are enriched in basic and acidic residues; that stretch reads ETEHQPGNEDKQA.

It belongs to the [NiFe]/[NiFeSe] hydrogenase small subunit family. In terms of assembly, heterodimer of a large and a small subunit. It depends on [4Fe-4S] cluster as a cofactor. [3Fe-4S] cluster is required as a cofactor. Predicted to be exported by the Tat system. The position of the signal peptide cleavage has not been experimentally proven.

It is found in the cell inner membrane. It catalyses the reaction H2 + A = AH2. In terms of biological role, this is one of three S.flexneri hydrogenases synthesized in response to different physiological conditions. HYD1 is believed to have a role in hydrogen cycling during fermentative growth. In Shigella flexneri, this protein is Hydrogenase-1 small chain (hyaA).